The primary structure comprises 440 residues: Long-chain alkane monooxygenase (440 aa).

FMN contacts are provided by residues aspartate 58, 137–138, tyrosine 158, and 227–230; these read SH and AGMS.

This sequence belongs to the NtaA/SnaA/DszA monooxygenase family. In terms of assembly, homodimer.

It is found in the secreted. It carries out the reaction a long-chain alkane + FMNH2 + O2 = a long chain fatty alcohol + FMN + H2O + H(+). In terms of biological role, involved in the degradation of long-chain alkanes. Converts alkanes ranging from C(15) to C(36) into their corresponding primary alcohols. The sequence is that of Long-chain alkane monooxygenase from Geobacillus thermodenitrificans (strain NG80-2).